The primary structure comprises 100 residues: Large ribosomal subunit protein uL23 (100 aa).

The protein belongs to the universal ribosomal protein uL23 family. As to quaternary structure, part of the 50S ribosomal subunit. Contacts protein L29, and trigger factor when it is bound to the ribosome.

In terms of biological role, one of the early assembly proteins it binds 23S rRNA. One of the proteins that surrounds the polypeptide exit tunnel on the outside of the ribosome. Forms the main docking site for trigger factor binding to the ribosome. The chain is Large ribosomal subunit protein uL23 from Mycobacterium marinum (strain ATCC BAA-535 / M).